A 364-amino-acid polypeptide reads, in one-letter code: Paraneoplastic antigen Ma2 (364 aa).

N-acetylalanine is present on A2. The span at 335 to 351 (EEEEASFENESIEEPEE) shows a compositional bias: acidic residues. The interval 335–364 (EEEEASFENESIEEPEERDGYGRWNHEGDD) is disordered. Over residues 352–364 (RDGYGRWNHEGDD) the composition is skewed to basic and acidic residues.

It belongs to the PNMA family. As to expression, brain-specific. In some cancer patients, specifically expressed by testicular tumor cells.

It localises to the nucleus. It is found in the nucleolus. This is Paraneoplastic antigen Ma2 (PNMA2) from Homo sapiens (Human).